A 148-amino-acid polypeptide reads, in one-letter code: Macrodomain Ter protein (148 aa).

It belongs to the MatP family. In terms of assembly, homodimer.

It localises to the cytoplasm. Functionally, required for spatial organization of the terminus region of the chromosome (Ter macrodomain) during the cell cycle. Prevents early segregation of duplicated Ter macrodomains during cell division. Binds specifically to matS, which is a 13 bp signature motif repeated within the Ter macrodomain. The sequence is that of Macrodomain Ter protein from Haemophilus ducreyi (strain 35000HP / ATCC 700724).